Reading from the N-terminus, the 307-residue chain is MEDVGQNPLDDVKNIFFASSLEAVKQNLDCLNSDLEKDLQKLDMENQVLLRKIKEKEETISSLERKLALSLEEAKEEEELNYVIDEQEESLRELELETAKLEKSNAILSRNVVEVQKKISGLFTNIGLEEETTKQILEEMKARLQKSTESCAKQEEELAKIESDYQSVSDLCKDQVYYIKKYQEVLRKMKEEKETLLLEKQISKAQDDSSQTVKPGSILADTTQRNMERTTIKKQERRCWYKYFQYLTFMVLVFIRLLAYVIFHLQYINPDLLVDVLPLVLSRGTLESLRKVSHPFLTLAVEEALPH.

Residues 17–207 adopt a coiled-coil conformation; the sequence is FASSLEAVKQ…LEKQISKAQD (191 aa). The helical transmembrane segment at 243–265 threads the bilayer; that stretch reads YFQYLTFMVLVFIRLLAYVIFHL.

It belongs to the TMCO5 family.

Its subcellular location is the membrane. The protein is Transmembrane and coiled-coil domain-containing protein 5B (TMCO5B) of Homo sapiens (Human).